The sequence spans 210 residues: uncharacterized protein (210 aa).

This is an uncharacterized protein from Aquifex aeolicus (strain VF5).